Reading from the N-terminus, the 268-residue chain is Tryptophan synthase alpha chain (268 aa).

Active-site proton acceptor residues include Glu-49 and Asp-60.

It belongs to the TrpA family. Tetramer of two alpha and two beta chains.

The enzyme catalyses (1S,2R)-1-C-(indol-3-yl)glycerol 3-phosphate + L-serine = D-glyceraldehyde 3-phosphate + L-tryptophan + H2O. Its pathway is amino-acid biosynthesis; L-tryptophan biosynthesis; L-tryptophan from chorismate: step 5/5. In terms of biological role, the alpha subunit is responsible for the aldol cleavage of indoleglycerol phosphate to indole and glyceraldehyde 3-phosphate. The chain is Tryptophan synthase alpha chain from Xanthomonas axonopodis pv. citri (strain 306).